A 215-amino-acid polypeptide reads, in one-letter code: uncharacterized protein (215 aa).

Helical transmembrane passes span isoleucine 21–asparagine 40, leucine 50–phenylalanine 69, phenylalanine 95–phenylalanine 117, leucine 122–leucine 144, asparagine 157–glutamine 179, and leucine 185–leucine 207.

It belongs to the CcmB/CycW/HelB family.

It localises to the cell membrane. This is an uncharacterized protein from Rickettsia prowazekii (strain Madrid E).